A 273-amino-acid chain; its full sequence is F-actin-capping protein subunit alpha (273 aa).

The protein belongs to the F-actin-capping protein alpha subunit family. In terms of assembly, heterodimer of an alpha and a beta subunit.

The protein localises to the cytoplasm. Its subcellular location is the cytoskeleton. Its function is as follows. F-actin-capping proteins bind in a Ca(2+)-independent manner to the fast growing ends of actin filaments (barbed end) thereby blocking the exchange of subunits at these ends. Unlike other capping proteins (such as gelsolin and severin), these proteins do not sever actin filaments. The polypeptide is F-actin-capping protein subunit alpha (CAP1) (Gibberella zeae (strain ATCC MYA-4620 / CBS 123657 / FGSC 9075 / NRRL 31084 / PH-1) (Wheat head blight fungus)).